The following is a 247-amino-acid chain: Probable transcriptional regulatory protein YebC (247 aa).

The interval 1–20 (MAGHSKWANTRHRKAAQDAK) is disordered.

This sequence belongs to the TACO1 family.

Its subcellular location is the cytoplasm. In Salmonella arizonae (strain ATCC BAA-731 / CDC346-86 / RSK2980), this protein is Probable transcriptional regulatory protein YebC.